Reading from the N-terminus, the 451-residue chain is Methionine aminopeptidase 2-2 (451 aa).

A disordered region spans residues 1 to 101 (MAAKVADDVA…IDEVFPNDSY (101 aa)). Residues 37-51 (EHEDSDDDNEAEEGA) show a composition bias toward acidic residues. Residues 60–73 (KKKKKRKPRKKKKA) show a composition bias toward basic residues. His204 serves as a coordination point for substrate. The a divalent metal cation site is built by Asp224, Asp235, and His304. Residue His312 coordinates substrate. Residues Glu337 and Glu432 each coordinate a divalent metal cation.

The protein belongs to the peptidase M24A family. Methionine aminopeptidase eukaryotic type 2 subfamily. Requires Co(2+) as cofactor. The cofactor is Zn(2+). Mn(2+) is required as a cofactor. Fe(2+) serves as cofactor.

Its subcellular location is the cytoplasm. The enzyme catalyses Release of N-terminal amino acids, preferentially methionine, from peptides and arylamides.. Functionally, cotranslationally removes the N-terminal methionine from nascent proteins. The N-terminal methionine is often cleaved when the second residue in the primary sequence is small and uncharged (Met-Ala-, Cys, Gly, Pro, Ser, Thr, or Val). The sequence is that of Methionine aminopeptidase 2-2 from Pyrenophora tritici-repentis (strain Pt-1C-BFP) (Wheat tan spot fungus).